A 352-amino-acid polypeptide reads, in one-letter code: MDYQVSSPTYDIDYYTSEPCQKVNVKQIAARLLPPLYSLVFIFGFVGNILVVLILINCKRLKSMTDIYLLNLAISDLFFLLTVPFWAHYAAAQWDFGNTMCQLLTGLYFIGFFSGIFFIILLTIDRYLAIVHAVFALKARTVTFGVVTSVITWVVAVFASLPGIIFTRSQREGVHYTCSSHFPYSQYQFWKNFQTLKIVILGLVLPLLVMVICYSGILKTLLRCRNEKKRHRAVRLIFTIMIVYFLFWAPYNIVLLLNTFQEFFGLNNCSSSNRLDQAMQVTETLGMTHCCINPIIYAFVGEKFRNYLLVFFQKHIAKRFCKCCSIFQQEAPERASSVYTRSTGEQETSVGL.

The Extracellular segment spans residues 1–30 (MDYQVSSPTYDIDYYTSEPCQKVNVKQIAA). The residue at position 3 (tyrosine 3) is a Sulfotyrosine. Residues serine 6 and serine 7 are each glycosylated (O-linked (GalNAc...) serine). Sulfotyrosine occurs at positions 10, 14, and 15. 2 disulfide bridges follow: cysteine 20–cysteine 269 and cysteine 101–cysteine 178. A helical membrane pass occupies residues 31–58 (RLLPPLYSLVFIFGFVGNILVVLILINC). Residues 59–68 (KRLKSMTDIY) are Cytoplasmic-facing. Residues 69-89 (LLNLAISDLFFLLTVPFWAHY) traverse the membrane as a helical segment. Residues 90-102 (AAAQWDFGNTMCQ) lie on the Extracellular side of the membrane. The helical transmembrane segment at 103–124 (LLTGLYFIGFFSGIFFIILLTI) threads the bilayer. The Cytoplasmic segment spans residues 125–141 (DRYLAIVHAVFALKART). The chain crosses the membrane as a helical span at residues 142-166 (VTFGVVTSVITWVVAVFASLPGIIF). Residues 167–198 (TRSQREGVHYTCSSHFPYSQYQFWKNFQTLKI) lie on the Extracellular side of the membrane. Residues 199–218 (VILGLVLPLLVMVICYSGIL) traverse the membrane as a helical segment. Topologically, residues 219 to 235 (KTLLRCRNEKKRHRAVR) are cytoplasmic. The chain crosses the membrane as a helical span at residues 236–260 (LIFTIMIVYFLFWAPYNIVLLLNTF). Over 261–277 (QEFFGLNNCSSSNRLDQ) the chain is Extracellular. Residues 278–301 (AMQVTETLGMTHCCINPIIYAFVG) form a helical membrane-spanning segment. Topologically, residues 302–352 (EKFRNYLLVFFQKHIAKRFCKCCSIFQQEAPERASSVYTRSTGEQETSVGL) are cytoplasmic. 3 S-palmitoyl cysteine lipidation sites follow: cysteine 321, cysteine 323, and cysteine 324. 4 positions are modified to phosphoserine; by BARK1: serine 336, serine 337, serine 342, and serine 349.

This sequence belongs to the G-protein coupled receptor 1 family. Interacts with PRAF2. Efficient ligand binding to CCL3/MIP-1alpha and CCL4/MIP-1beta requires sulfation, O-glycosylation and sialic acid modifications. Glycosylation on Ser-6 is required for efficient binding of CCL4. Interacts with GRK2. Interacts with ARRB1 and ARRB2. Interacts with CNIH4. Interacts with S100A4; this interaction stimulates T-lymphocyte chemotaxis. Post-translationally, sulfated on at least 2 of the N-terminal tyrosines. Sulfation is required for efficient binding of the chemokines, CCL3 and CCL4. Palmitoylation in the C-terminal is important for cell surface expression. In terms of processing, phosphorylation on serine residues in the C-terminal is stimulated by binding CC chemokines especially by APO-RANTES. Post-translationally, O-glycosylated, but not N-glycosylated. Ser-6 appears to be the major site even if Ser-7 may be also O-glycosylated. Also sialylated glycans present which contribute to chemokine binding. Thr-16 and Ser-17 may also be glycosylated and, if so, with small moieties such as a T-antigen.

It localises to the cell membrane. Its function is as follows. Receptor for a number of inflammatory CC-chemokines including CCL3/MIP-1-alpha, CCL4/MIP-1-beta and RANTES and subsequently transduces a signal by increasing the intracellular calcium ion level. May play a role in the control of granulocytic lineage proliferation or differentiation. Participates in T-lymphocyte migration to the infection site by acting as a chemotactic receptor. This is C-C chemokine receptor type 5 (CCR5) from Rhinopithecus avunculus (Tonkin snub-nosed monkey).